We begin with the raw amino-acid sequence, 185 residues long: Ribosome-recycling factor (185 aa).

This sequence belongs to the RRF family.

It localises to the cytoplasm. Responsible for the release of ribosomes from messenger RNA at the termination of protein biosynthesis. May increase the efficiency of translation by recycling ribosomes from one round of translation to another. This Acidothermus cellulolyticus (strain ATCC 43068 / DSM 8971 / 11B) protein is Ribosome-recycling factor.